The following is a 565-amino-acid chain: Proline--tRNA ligase (565 aa).

The protein belongs to the class-II aminoacyl-tRNA synthetase family. ProS type 1 subfamily. Homodimer.

The protein localises to the cytoplasm. It carries out the reaction tRNA(Pro) + L-proline + ATP = L-prolyl-tRNA(Pro) + AMP + diphosphate. Catalyzes the attachment of proline to tRNA(Pro) in a two-step reaction: proline is first activated by ATP to form Pro-AMP and then transferred to the acceptor end of tRNA(Pro). As ProRS can inadvertently accommodate and process non-cognate amino acids such as alanine and cysteine, to avoid such errors it has two additional distinct editing activities against alanine. One activity is designated as 'pretransfer' editing and involves the tRNA(Pro)-independent hydrolysis of activated Ala-AMP. The other activity is designated 'posttransfer' editing and involves deacylation of mischarged Ala-tRNA(Pro). The misacylated Cys-tRNA(Pro) is not edited by ProRS. The sequence is that of Proline--tRNA ligase from Lactobacillus johnsonii (strain CNCM I-12250 / La1 / NCC 533).